Consider the following 190-residue polypeptide: Cancer-related nucleoside-triphosphatase homolog (190 aa).

ATP is bound by residues 9 to 16 (GPPGVGKT) and 109 to 116 (VCIIDEIG). An N6-acetyllysine modification is found at lysine 165.

This sequence belongs to the THEP1 NTPase family. Monomer.

The enzyme catalyses a ribonucleoside 5'-triphosphate + H2O = a ribonucleoside 5'-diphosphate + phosphate + H(+). It carries out the reaction 5-methyl-UTP + H2O = 5-methyl-UDP + phosphate + H(+). It catalyses the reaction CTP + H2O = CDP + phosphate + H(+). The catalysed reaction is ATP + H2O = ADP + phosphate + H(+). The enzyme catalyses GTP + H2O = GDP + phosphate + H(+). Its function is as follows. Has nucleotide phosphatase activity towards ATP, GTP, CTP, TTP and UTP. Hydrolyzes nucleoside diphosphates with lower efficiency. In Mus musculus (Mouse), this protein is Cancer-related nucleoside-triphosphatase homolog.